Consider the following 314-residue polypeptide: Cytochrome f (314 aa).

The first 29 residues, Met-1–Ala-29, serve as a signal peptide directing secretion. Residues Tyr-30, Cys-50, Cys-53, and His-54 each coordinate heme. Residues Val-280–Lys-300 traverse the membrane as a helical segment.

Belongs to the cytochrome f family. As to quaternary structure, the 4 large subunits of the cytochrome b6-f complex are cytochrome b6, subunit IV (17 kDa polypeptide, petD), cytochrome f and the Rieske protein, while the 4 small subunits are PetG, PetL, PetM and PetN. The complex functions as a dimer. It depends on heme as a cofactor.

It localises to the plastid. The protein localises to the chloroplast thylakoid membrane. Functionally, component of the cytochrome b6-f complex, which mediates electron transfer between photosystem II (PSII) and photosystem I (PSI), cyclic electron flow around PSI, and state transitions. In Illicium oligandrum (Star anise), this protein is Cytochrome f.